A 437-amino-acid polypeptide reads, in one-letter code: Glutamyl-tRNA reductase (437 aa).

Substrate is bound by residues 49 to 52 (TCNR), S109, 114 to 116 (EGQ), and Q120. The active-site Nucleophile is the C50. 198–203 (GAGRMS) provides a ligand contact to NADP(+).

Belongs to the glutamyl-tRNA reductase family. Homodimer.

It catalyses the reaction (S)-4-amino-5-oxopentanoate + tRNA(Glu) + NADP(+) = L-glutamyl-tRNA(Glu) + NADPH + H(+). It functions in the pathway porphyrin-containing compound metabolism; protoporphyrin-IX biosynthesis; 5-aminolevulinate from L-glutamyl-tRNA(Glu): step 1/2. The protein operates within porphyrin-containing compound metabolism; chlorophyll biosynthesis. Its function is as follows. Catalyzes the NADPH-dependent reduction of glutamyl-tRNA(Glu) to glutamate 1-semialdehyde (GSA). The chain is Glutamyl-tRNA reductase from Synechococcus sp. (strain CC9311).